Reading from the N-terminus, the 262-residue chain is Small ribosomal subunit protein eS4A (262 aa).

The S4 RNA-binding domain occupies 42–105 (LPLIVFLRNR…GEHFRLVYDI (64 aa)).

The protein belongs to the eukaryotic ribosomal protein eS4 family. As to quaternary structure, component of the small ribosomal subunit (SSU). Mature yeast ribosomes consist of a small (40S) and a large (60S) subunit. The 40S small subunit contains 1 molecule of ribosomal RNA (18S rRNA) and at least 33 different proteins. The large 60S subunit contains 3 rRNA molecules (25S, 5.8S and 5S rRNA) and at least 46 different proteins.

Its subcellular location is the cytoplasm. Component of the ribosome, a large ribonucleoprotein complex responsible for the synthesis of proteins in the cell. The small ribosomal subunit (SSU) binds messenger RNAs (mRNAs) and translates the encoded message by selecting cognate aminoacyl-transfer RNA (tRNA) molecules. The large subunit (LSU) contains the ribosomal catalytic site termed the peptidyl transferase center (PTC), which catalyzes the formation of peptide bonds, thereby polymerizing the amino acids delivered by tRNAs into a polypeptide chain. The nascent polypeptides leave the ribosome through a tunnel in the LSU and interact with protein factors that function in enzymatic processing, targeting, and the membrane insertion of nascent chains at the exit of the ribosomal tunnel. This Schizosaccharomyces pombe (strain 972 / ATCC 24843) (Fission yeast) protein is Small ribosomal subunit protein eS4A (rps401).